The following is a 608-amino-acid chain: Altered inheritance of mitochondria protein 9, mitochondrial (608 aa).

The transit peptide at 1–21 directs the protein to the mitochondrion; it reads MLRRIVNTGTKRLFRVPPRSS.

The protein belongs to the AIM9 family.

It is found in the mitochondrion. The polypeptide is Altered inheritance of mitochondria protein 9, mitochondrial (AIM9) (Clavispora lusitaniae (strain ATCC 42720) (Yeast)).